The primary structure comprises 117 residues: Large ribosomal subunit protein bL20 (117 aa).

The protein belongs to the bacterial ribosomal protein bL20 family.

Its function is as follows. Binds directly to 23S ribosomal RNA and is necessary for the in vitro assembly process of the 50S ribosomal subunit. It is not involved in the protein synthesizing functions of that subunit. This Crocosphaera subtropica (strain ATCC 51142 / BH68) (Cyanothece sp. (strain ATCC 51142)) protein is Large ribosomal subunit protein bL20.